The following is a 663-amino-acid chain: UvrABC system protein B (663 aa).

Over residues 1 to 10 (MIDKRDDKPF) the composition is skewed to basic and acidic residues. Residues 1-23 (MIDKRDDKPFKLKSKYKPSGDQP) are disordered. Residues 31 to 418 (DNIEGGEKAQ…TNTIIEQIIR (388 aa)) enclose the Helicase ATP-binding domain. 44–51 (GATGTGKT) is an ATP binding site. The short motif at 97 to 120 (YYDYYQPEAYVPSSDTYIEKDSSV) is the Beta-hairpin element. Positions 435-601 (QMDDLLGEIN…TIKKDIRGLI (167 aa)) constitute a Helicase C-terminal domain. The region spanning 627–662 (KEAINALQKQMQEAAELLDFELAAQMRDLILELKLM) is the UVR domain.

Belongs to the UvrB family. As to quaternary structure, forms a heterotetramer with UvrA during the search for lesions. Interacts with UvrC in an incision complex.

It is found in the cytoplasm. The UvrABC repair system catalyzes the recognition and processing of DNA lesions. A damage recognition complex composed of 2 UvrA and 2 UvrB subunits scans DNA for abnormalities. Upon binding of the UvrA(2)B(2) complex to a putative damaged site, the DNA wraps around one UvrB monomer. DNA wrap is dependent on ATP binding by UvrB and probably causes local melting of the DNA helix, facilitating insertion of UvrB beta-hairpin between the DNA strands. Then UvrB probes one DNA strand for the presence of a lesion. If a lesion is found the UvrA subunits dissociate and the UvrB-DNA preincision complex is formed. This complex is subsequently bound by UvrC and the second UvrB is released. If no lesion is found, the DNA wraps around the other UvrB subunit that will check the other stand for damage. This Streptococcus pyogenes serotype M28 (strain MGAS6180) protein is UvrABC system protein B.